The sequence spans 378 residues: Cyclic GMP-AMP synthase-like receptor 1 (378 aa).

Mg(2+) is bound by residues glutamate 71, aspartate 73, and aspartate 187. Residue 71 to 73 (EFD) participates in ATP binding. Residues aspartate 187 and 233 to 240 (TSSFYEAE) each bind GTP. ATP contacts are provided by residues 237–240 (YEAE), lysine 258, and 271–275 (SYHIK).

Belongs to the mab-21 family. Mg(2+) serves as cofactor. Mn(2+) is required as a cofactor.

The enzyme catalyses GTP + ATP = 3',2'-cGAMP + 2 diphosphate. It catalyses the reaction GTP + ATP = pppA(2'-5')pG + diphosphate. It carries out the reaction pppA(2'-5')pG = 3',2'-cGAMP + diphosphate. With respect to regulation, the enzyme activity is specifically activated by double-stranded RNA (dsRNA). Recognizes long dsRNA (&gt;30 bp) with no preference for 5' RNA phosphorylation. Functionally, nucleotidyltransferase that catalyzes the formation of cyclic GMP-AMP (3',2'-cGAMP) from ATP and GTP and plays a key role in antiviral innate immunity. Synthesizes 3',2'-cGAMP in a two-step reaction through production of the linear intermediate pppA(2'-5')pG. Acts as a key sensor of double-stranded RNA (dsRNA), the presence of dsRNA in the cytoplasm being a danger signal that triggers the immune responses. Directly binds dsRNA, activating the nucleotidyltransferase activity, leading to synthesis of 3',2'-cGAMP, a second messenger that binds to and activates Sting, thereby triggering the antiviral immune response via activation of the NF-kappa-B transcription factor Rel (Relish). 3',2'-cGAMP is protected from poxin cleavage. The protein is Cyclic GMP-AMP synthase-like receptor 1 of Drosophila melanogaster (Fruit fly).